Consider the following 426-residue polypeptide: Tol-Pal system protein TolB (426 aa).

The first 25 residues, 1-25 (MNAMSRISRRIFLALALSLAGLAQA), serve as a signal peptide directing secretion.

The protein belongs to the TolB family. The Tol-Pal system is composed of five core proteins: the inner membrane proteins TolA, TolQ and TolR, the periplasmic protein TolB and the outer membrane protein Pal. They form a network linking the inner and outer membranes and the peptidoglycan layer.

Its subcellular location is the periplasm. In terms of biological role, part of the Tol-Pal system, which plays a role in outer membrane invagination during cell division and is important for maintaining outer membrane integrity. This is Tol-Pal system protein TolB from Dechloromonas aromatica (strain RCB).